A 230-amino-acid chain; its full sequence is tRNA (guanine-N(7)-)-methyltransferase (230 aa).

4 residues coordinate S-adenosyl-L-methionine: glutamate 61, glutamate 86, aspartate 113, and aspartate 135. The active site involves aspartate 135. Residues lysine 139, aspartate 171, and 209–212 each bind substrate; that span reads TRYE.

It belongs to the class I-like SAM-binding methyltransferase superfamily. TrmB family.

It catalyses the reaction guanosine(46) in tRNA + S-adenosyl-L-methionine = N(7)-methylguanosine(46) in tRNA + S-adenosyl-L-homocysteine. Its pathway is tRNA modification; N(7)-methylguanine-tRNA biosynthesis. Its function is as follows. Catalyzes the formation of N(7)-methylguanine at position 46 (m7G46) in tRNA. The protein is tRNA (guanine-N(7)-)-methyltransferase of Azorhizobium caulinodans (strain ATCC 43989 / DSM 5975 / JCM 20966 / LMG 6465 / NBRC 14845 / NCIMB 13405 / ORS 571).